Here is a 141-residue protein sequence, read N- to C-terminus: Large ribosomal subunit protein uL11 (141 aa).

The protein belongs to the universal ribosomal protein uL11 family. Part of the ribosomal stalk of the 50S ribosomal subunit. Interacts with L10 and the large rRNA to form the base of the stalk. L10 forms an elongated spine to which L12 dimers bind in a sequential fashion forming a multimeric L10(L12)X complex. One or more lysine residues are methylated.

Forms part of the ribosomal stalk which helps the ribosome interact with GTP-bound translation factors. The protein is Large ribosomal subunit protein uL11 of Prochlorococcus marinus subsp. pastoris (strain CCMP1986 / NIES-2087 / MED4).